Reading from the N-terminus, the 227-residue chain is Uracil-DNA glycosylase (227 aa).

Asp-68 acts as the Proton acceptor in catalysis.

Belongs to the uracil-DNA glycosylase (UDG) superfamily. UNG family.

It is found in the cytoplasm. It catalyses the reaction Hydrolyzes single-stranded DNA or mismatched double-stranded DNA and polynucleotides, releasing free uracil.. Its function is as follows. Excises uracil residues from the DNA which can arise as a result of misincorporation of dUMP residues by DNA polymerase or due to deamination of cytosine. This is Uracil-DNA glycosylase from Mycobacterium leprae (strain Br4923).